Here is a 400-residue protein sequence, read N- to C-terminus: Protection of telomeres homolog 1 (400 aa).

It belongs to the telombin family. As to expression, expressed in sperm and oocytes.

The protein localises to the nucleus. It localises to the nucleus envelope. Its subcellular location is the chromosome. The protein resides in the telomere. Functionally, telomeric DNA-binding protein, which binds to single-stranded C-rich repeat sequences, with high specificity to the 5'-GCCTAA-3' sequence. Repeat sequence binding can be at the 5' or 3' telomeric end. May have a role in protecting the 5' end of the C-rich strand of the telomere. Acts redundantly with pot-2 to negatively regulate telomerase-mediated telomere extension. Also regulates telomere length by the telomerase-independent telomere maintenance pathway called ALT (alternative lengthening of telomeres). Through sun-1, anchors telomeres to the nuclear envelope in embryos. The protein is Protection of telomeres homolog 1 of Caenorhabditis elegans.